The chain runs to 229 residues: Auxin-responsive protein IAA17 (229 aa).

Residues 14–18 carry the EAR-like (transcriptional repression) motif; the sequence is LCLGL. Residues 110-211 enclose the PB1 domain; sequence AAFVKVSMDG…TCKRLRLMKG (102 aa).

The protein belongs to the Aux/IAA family. Homodimers and heterodimers. Interacts with the auxin response factors ARF1 and IAA24. Interacts with IAA1. Interacts with TPL. Interacts (via PB1 domain) with ARF7 (via PB1 domain). Phosphorylated by phytochrome A in vitro.

The protein resides in the nucleus. Its function is as follows. Aux/IAA proteins are short-lived transcriptional factors that function as repressors of early auxin response genes at low auxin concentrations. Repression is thought to result from the interaction with auxin response factors (ARFs), proteins that bind to the auxin-responsive promoter element (AuxRE). Formation of heterodimers with ARF proteins may alter their ability to modulate early auxin response genes expression. The sequence is that of Auxin-responsive protein IAA17 (IAA17) from Arabidopsis thaliana (Mouse-ear cress).